Reading from the N-terminus, the 455-residue chain is MPRVPAAHTLVIGLGVSGQAIARHLSRRGEPFMVADTRESPAGLEAFRAAHPGVDVVCGPLEALDMQEAREIVLSPGVDPRTPGLIDYVDHPGSGPEVVGEMALFVRECRSPIAAITGSNAKSTVTTLLGEMARESGWKTAVGGNLGTPALDLLDESPDAELFVLELSSFQLETTPWLGADTAAFLNLSEDHLDRHGDMQGYRAAKQRIFRGARHAVVNAEDPATWPDAPSCAVTRFTTDMPESGEWGIVDHDGERWLAQGRAAIMPVGQVRMPGRHNHANALAALAMGAHLGLSREAMCRVLERFPGLPHRGEFIVEREGVRWINDSKGTNVGATLAAIAGIGSDLEGRLILLAGGDGKGADFSPLAEPLAHHAREAIVFGRDAERLEQALSARLPVTRVADLAAAMQRARTIARAGDTVLLSPACASLDQFPNYMARGEAFRQWLATDGEAAC.

Gly118–Thr124 serves as a coordination point for ATP.

The protein belongs to the MurCDEF family.

It localises to the cytoplasm. It carries out the reaction UDP-N-acetyl-alpha-D-muramoyl-L-alanine + D-glutamate + ATP = UDP-N-acetyl-alpha-D-muramoyl-L-alanyl-D-glutamate + ADP + phosphate + H(+). The protein operates within cell wall biogenesis; peptidoglycan biosynthesis. In terms of biological role, cell wall formation. Catalyzes the addition of glutamate to the nucleotide precursor UDP-N-acetylmuramoyl-L-alanine (UMA). The chain is UDP-N-acetylmuramoylalanine--D-glutamate ligase from Chromohalobacter salexigens (strain ATCC BAA-138 / DSM 3043 / CIP 106854 / NCIMB 13768 / 1H11).